The chain runs to 643 residues: Type VI secretion system spike protein VgrG1a (643 aa).

This sequence belongs to the VgrG protein family. In terms of assembly, forms homotrimers. Part of the type VI secretion system (T6SS). Interacts with EagT6 and Tse6; these interactions are required for Tse6 loading onto VgrG1. Interacts with Hcp1.

It localises to the secreted. Part of the H1 type VI secretion system (H1-T6SS) specialized secretion system, which delivers several virulence factors in both prokaryotic and eukaryotic cells during infection. Forms the spike at the tip of the elongating tube formed by haemolysin co-regulated protein 1/Hcp1. Allows the delivery of the Tse6 toxin to target cells where it exerts its toxicity. This Pseudomonas aeruginosa (strain ATCC 15692 / DSM 22644 / CIP 104116 / JCM 14847 / LMG 12228 / 1C / PRS 101 / PAO1) protein is Type VI secretion system spike protein VgrG1a.